We begin with the raw amino-acid sequence, 201 residues long: 3-isopropylmalate dehydratase small subunit (201 aa).

Belongs to the LeuD family. LeuD type 1 subfamily. As to quaternary structure, heterodimer of LeuC and LeuD.

It carries out the reaction (2R,3S)-3-isopropylmalate = (2S)-2-isopropylmalate. The protein operates within amino-acid biosynthesis; L-leucine biosynthesis; L-leucine from 3-methyl-2-oxobutanoate: step 2/4. In terms of biological role, catalyzes the isomerization between 2-isopropylmalate and 3-isopropylmalate, via the formation of 2-isopropylmaleate. The protein is 3-isopropylmalate dehydratase small subunit of Shewanella baltica (strain OS223).